Here is a 602-residue protein sequence, read N- to C-terminus: Elongation factor 4 (602 aa).

Positions 6–188 constitute a tr-type G domain; that stretch reads DHIRNFSIVA…AIVNKLPAPK (183 aa). Residues 18 to 23 and 135 to 138 each bind GTP; these read DHGKST and NKID.

This sequence belongs to the TRAFAC class translation factor GTPase superfamily. Classic translation factor GTPase family. LepA subfamily.

Its subcellular location is the cell inner membrane. It catalyses the reaction GTP + H2O = GDP + phosphate + H(+). Its function is as follows. Required for accurate and efficient protein synthesis under certain stress conditions. May act as a fidelity factor of the translation reaction, by catalyzing a one-codon backward translocation of tRNAs on improperly translocated ribosomes. Back-translocation proceeds from a post-translocation (POST) complex to a pre-translocation (PRE) complex, thus giving elongation factor G a second chance to translocate the tRNAs correctly. Binds to ribosomes in a GTP-dependent manner. This Brucella suis (strain ATCC 23445 / NCTC 10510) protein is Elongation factor 4.